Here is a 1164-residue protein sequence, read N- to C-terminus: IgA FC receptor (1164 aa).

The signal sequence occupies residues 1–37 (MFKSNYERKMRYSIRKFSVGVASVAVASLFMGSVAHA). Disordered regions lie at residues 54–75 (KPYP…ELET) and 167–220 (HEEV…EDKD). The span at 59–73 (MAQTDQGNNSSSSEL) shows a compositional bias: polar residues. Composition is skewed to basic and acidic residues over residues 167-176 (HEEVEKDKKA) and 183-220 (KQSD…EDKD). 2 igA-binding regions span residues 199–438 (NHQK…KIEL) and 439–826 (TVSP…ETNT). One can recognise an Ig-like domain in the interval 434 to 534 (QKIELTVSPE…VEKTFTITVQ (101 aa)). A compositionally biased stretch (basic and acidic residues) spans 536 to 564 (KEEKQVPKTPEQKDSKTEEKVPQEPKSND). Disordered regions lie at residues 536-567 (KEEK…DKNQ) and 823-947 (ETNT…PDGL). Positions 911 to 920 (PKIPEPPKTP) are enriched in pro residues. Positions 1132–1136 (LPYTG) match the LPXTG sorting signal motif. Thr1135 carries the post-translational modification Pentaglycyl murein peptidoglycan amidated threonine. The propeptide at 1136-1164 (GVASNLVLEIMGLLGLIGTSFIAMKRRKS) is removed by sortase.

It localises to the secreted. It is found in the cell wall. The polypeptide is IgA FC receptor (bag) (Streptococcus agalactiae).